We begin with the raw amino-acid sequence, 689 residues long: Protein asunder (689 aa).

Residues 521–550 (NGARLKLSKAKDQYRLLYRELEQLIQLNAT) are a coiled coil. Residues 578–619 (GASLLRSYTESPLSPERLEPITSGSASGSSNSNSLLKASKRR) are disordered. A compositionally biased stretch (low complexity) spans 600 to 614 (SGSASGSSNSNSLLK). Positions 613-619 (LKASKRR) match the Nuclear localization signal (NLS) motif.

Belongs to the Integrator subunit 13 family. In terms of assembly, belongs to the multiprotein complex Integrator, at least composed of IntS1, IntS2, IntS3, IntS4, omd/IntS5, IntS6, defl/IntS7, IntS8, IntS9, IntS10, IntS11, IntS12, asun/IntS13, IntS14 and IntS15. The core complex associates with protein phosphatase 2A subunits mts/PP2A and Pp2A-29B, to form the Integrator-PP2A (INTAC) complex. Phosphorylated.

It is found in the nucleus. Its subcellular location is the cytoplasm. The protein localises to the perinuclear region. Component of the integrator complex, a multiprotein complex that terminates RNA polymerase II (Pol II) transcription in the promoter-proximal region of genes. The integrator complex provides a quality checkpoint during transcription elongation by driving premature transcription termination of transcripts that are unfavorably configured for transcriptional elongation: the complex terminates transcription by (1) catalyzing dephosphorylation of the C-terminal domain (CTD) of Pol II subunit Polr2A/Rbp1 and Spt5, and (2) degrading the exiting nascent RNA transcript via endonuclease activity. The integrator complex is also involved in the 3'-end processing of the U7 snRNA, and also the spliceosomal snRNAs U1, U2, U4 and U5. This Drosophila erecta (Fruit fly) protein is Protein asunder (asun).